A 743-amino-acid chain; its full sequence is Threonine synthase-like 1 (743 aa).

An N6-acetyllysine modification is found at Lys281. Lys351 is modified (N6-(pyridoxal phosphate)lysine).

This sequence belongs to the threonine synthase family. It depends on pyridoxal 5'-phosphate as a cofactor.

The sequence is that of Threonine synthase-like 1 (THNSL1) from Pongo abelii (Sumatran orangutan).